The following is a 1072-amino-acid chain: Carbamoyl phosphate synthase large chain (1072 aa).

Positions 1–401 (MPKRLDINTI…SLLKAVRSLE (401 aa)) are carboxyphosphate synthetic domain. Arg129, Arg169, Gly175, Gly176, Lys208, Ile210, Glu215, Gly241, Val242, His243, Gln284, and Glu298 together coordinate ATP. The 195-residue stretch at 133–327 (RTLMQDLNEP…IAKLAAKIAV (195 aa)) folds into the ATP-grasp 1 domain. Residues Gln284, Glu298, and Asn300 each contribute to the Mg(2+) site. Positions 284, 298, and 300 each coordinate Mn(2+). The interval 402–546 (LGIYHLELDH…YSTYAEENES (145 aa)) is oligomerization domain. Positions 547-929 (IVTDRKSVVV…ALYKGLVASG (383 aa)) are carbamoyl phosphate synthetic domain. Residues 671 to 861 (EAALTKLGIP…MANVATKVIL (191 aa)) form the ATP-grasp 2 domain. ATP-binding residues include Arg707, Arg746, Glu752, Gly777, Val778, His779, Ser780, Gln820, and Glu832. 3 residues coordinate Mg(2+): Gln820, Glu832, and Asn834. Residues Gln820, Glu832, and Asn834 each coordinate Mn(2+). An MGS-like domain is found at 930–1072 (INIPTHGSVI…QTKRHEVVHA (143 aa)). Residues 930-1072 (INIPTHGSVI…QTKRHEVVHA (143 aa)) form an allosteric domain region.

This sequence belongs to the CarB family. As to quaternary structure, composed of two chains; the small (or glutamine) chain promotes the hydrolysis of glutamine to ammonia, which is used by the large (or ammonia) chain to synthesize carbamoyl phosphate. Tetramer of heterodimers (alpha,beta)4. Mg(2+) serves as cofactor. The cofactor is Mn(2+).

The catalysed reaction is hydrogencarbonate + L-glutamine + 2 ATP + H2O = carbamoyl phosphate + L-glutamate + 2 ADP + phosphate + 2 H(+). The enzyme catalyses hydrogencarbonate + NH4(+) + 2 ATP = carbamoyl phosphate + 2 ADP + phosphate + 2 H(+). Its pathway is amino-acid biosynthesis; L-arginine biosynthesis; carbamoyl phosphate from bicarbonate: step 1/1. It participates in pyrimidine metabolism; UMP biosynthesis via de novo pathway; (S)-dihydroorotate from bicarbonate: step 1/3. Functionally, large subunit of the glutamine-dependent carbamoyl phosphate synthetase (CPSase). CPSase catalyzes the formation of carbamoyl phosphate from the ammonia moiety of glutamine, carbonate, and phosphate donated by ATP, constituting the first step of 2 biosynthetic pathways, one leading to arginine and/or urea and the other to pyrimidine nucleotides. The large subunit (synthetase) binds the substrates ammonia (free or transferred from glutamine from the small subunit), hydrogencarbonate and ATP and carries out an ATP-coupled ligase reaction, activating hydrogencarbonate by forming carboxy phosphate which reacts with ammonia to form carbamoyl phosphate. The sequence is that of Carbamoyl phosphate synthase large chain from Bacillus cereus (strain ATCC 10987 / NRS 248).